The chain runs to 161 residues: Alpha-crystallin A chain (161 aa).

The segment at 1–51 is required for complex formation with BFSP1 and BFSP2; sequence ALGPFYPSRXXXXXXXXXXXXXXXXXXXXXXXXXXXXQSLFRTVLDSGISE. Position 38 is a deamidated glutamine; partial (glutamine 38). The region spanning 40–150 is the sHSP domain; that stretch reads LFRTVLDSGI…SHSERAIPVS (111 aa). The residue at position 87 (lysine 87) is an N6-acetyllysine. Residue histidine 88 coordinates Zn(2+). Asparagine 89 bears the Deamidated asparagine; partial mark. Residues glutamate 90 and histidine 95 each coordinate Zn(2+). Phosphoserine is present on serine 110. Asparagine 111 is modified (deamidated asparagine; partial). The cysteines at positions 119 and 130 are disulfide-linked. Residue glutamine 135 is modified to Deamidated glutamine; partial. Residues 140–161 form a disordered region; the sequence is ASHSERAIPVSREEKPSSAPSS. Residues 141 to 155 are compositionally biased toward basic and acidic residues; the sequence is SHSERAIPVSREEKP. Histidine 142 is a binding site for Zn(2+). Serine 150 carries an O-linked (GlcNAc) serine glycan.

Belongs to the small heat shock protein (HSP20) family. As to quaternary structure, heteromer composed of three CRYAA and one CRYAB subunits. Inter-subunit bridging via zinc ions enhances stability, which is crucial as there is no protein turn over in the lens. Can also form homodimers and homotetramers (dimers of dimers) which serve as the building blocks of homooligomers. Within homooligomers, the zinc-binding motif is created from residues of 3 different molecules. His-88 and Glu-90 from one molecule are ligands of the zinc ion, and His-95 and His-142 residues from additional molecules complete the site with tetrahedral coordination geometry. Part of a complex required for lens intermediate filament formation composed of BFSP1, BFSP2 and CRYAA. Undergoes age-dependent proteolytical cleavage at the C-terminus.

The protein localises to the cytoplasm. The protein resides in the nucleus. Its function is as follows. Contributes to the transparency and refractive index of the lens. In its oxidized form (absence of intramolecular disulfide bond), acts as a chaperone, preventing aggregation of various proteins under a wide range of stress conditions. Required for the correct formation of lens intermediate filaments as part of a complex composed of BFSP1, BFSP2 and CRYAA. This Galegeeska rufescens (East African rufous sengi) protein is Alpha-crystallin A chain (CRYAA).